A 42-amino-acid chain; its full sequence is Photosystem I reaction center subunit IX (42 aa).

The chain crosses the membrane as a helical span at residues 7-27 (YLSTAPVLATIWFIILAGLLI).

Belongs to the PsaJ family.

The protein resides in the plastid. The protein localises to the chloroplast thylakoid membrane. May help in the organization of the PsaE and PsaF subunits. This Mesostigma viride (Green alga) protein is Photosystem I reaction center subunit IX.